The sequence spans 214 residues: Nucleoside triphosphate pyrophosphatase (214 aa).

The active-site Proton acceptor is the Asp79.

It belongs to the Maf family. It depends on a divalent metal cation as a cofactor.

Its subcellular location is the cytoplasm. The enzyme catalyses a ribonucleoside 5'-triphosphate + H2O = a ribonucleoside 5'-phosphate + diphosphate + H(+). The catalysed reaction is a 2'-deoxyribonucleoside 5'-triphosphate + H2O = a 2'-deoxyribonucleoside 5'-phosphate + diphosphate + H(+). In terms of biological role, nucleoside triphosphate pyrophosphatase. May have a dual role in cell division arrest and in preventing the incorporation of modified nucleotides into cellular nucleic acids. The chain is Nucleoside triphosphate pyrophosphatase from Rhodococcus opacus (strain B4).